A 985-amino-acid polypeptide reads, in one-letter code: Protein psiQ (985 aa).

The first 20 residues, 1-20, serve as a signal peptide directing secretion; that stretch reads MMKYIYILLIFSLLFLKINS. Residues 102-247 enclose the PA14 domain; that stretch reads QSTTNPNVYA…YDECGVCQGD (146 aa). Asn-127, Asn-309, Asn-424, Asn-491, Asn-517, Asn-527, Asn-592, Asn-620, Asn-649, Asn-696, Asn-735, Asn-767, Asn-786, Asn-824, and Asn-842 each carry an N-linked (GlcNAc...) asparagine glycan.

Belongs to the prespore-cell-inducing factor family.

It is found in the secreted. The polypeptide is Protein psiQ (psiQ) (Dictyostelium discoideum (Social amoeba)).